A 292-amino-acid chain; its full sequence is 33 kDa chaperonin (292 aa).

2 disulfide bridges follow: Cys230–Cys232 and Cys263–Cys266.

The protein belongs to the HSP33 family. Post-translationally, under oxidizing conditions two disulfide bonds are formed involving the reactive cysteines. Under reducing conditions zinc is bound to the reactive cysteines and the protein is inactive.

The protein localises to the cytoplasm. Its function is as follows. Redox regulated molecular chaperone. Protects both thermally unfolding and oxidatively damaged proteins from irreversible aggregation. Plays an important role in the bacterial defense system toward oxidative stress. The protein is 33 kDa chaperonin of Shigella boydii serotype 4 (strain Sb227).